Reading from the N-terminus, the 376-residue chain is MSQDVLTLAQDLIARASVTPLDEGCQPLMAKRLAAKGFNIEPMVFEDTTNMWARRGDQGPLFCFAGHTDVVPVGDLNRWHTPPFEPVVIDGYLHGRGAADMKGSLAAMVVATERFVDKHPDHKGSIAFLITSDEEGPFINGTTRVIDTLEARNEKITWSLVGEPSSTHKLGDIVKNGRRGSLTGNLTVKGVQGHVAYPHLADNPIHKAAPALDELARMKWDNGNEFFPPTSFQIANINGGTGASNVIPGSLEVMFNFRYSTEVTAEILIQRVLNILDAHGLDYDISWIFNGLPFLTDAGPLLDATREAIYEITGTETDPQTSGGTSDGRFIAPTGAQVIELGPVNATIHKVNECVKVEDIEQLAKVYERILEKLLC.

Zn(2+) is bound at residue H67. D69 is an active-site residue. A Zn(2+)-binding site is contributed by D100. The active-site Proton acceptor is the E134. The Zn(2+) site is built by E135, E163, and H349.

The protein belongs to the peptidase M20A family. DapE subfamily. As to quaternary structure, homodimer. Zn(2+) is required as a cofactor. Requires Co(2+) as cofactor.

It catalyses the reaction N-succinyl-(2S,6S)-2,6-diaminopimelate + H2O = (2S,6S)-2,6-diaminopimelate + succinate. Its pathway is amino-acid biosynthesis; L-lysine biosynthesis via DAP pathway; LL-2,6-diaminopimelate from (S)-tetrahydrodipicolinate (succinylase route): step 3/3. Catalyzes the hydrolysis of N-succinyl-L,L-diaminopimelic acid (SDAP), forming succinate and LL-2,6-diaminopimelate (DAP), an intermediate involved in the bacterial biosynthesis of lysine and meso-diaminopimelic acid, an essential component of bacterial cell walls. The polypeptide is Succinyl-diaminopimelate desuccinylase 1 (Shewanella loihica (strain ATCC BAA-1088 / PV-4)).